The primary structure comprises 1865 residues: Dedicator of cytokinesis protein 1 (1865 aa).

In terms of domain architecture, SH3 spans 9-70 (REEKYGVAFY…PASYIHLKEA (62 aa)). The C2 DOCK-type domain maps to 425 to 609 (RNDIYVTLVQ…DSFQISTLVC (185 aa)). In terms of domain architecture, DOCKER spans 1207-1617 (YKEIEREEMY…VEKEYGVRIM (411 aa)). 2 disordered regions span residues 1619-1716 (SSLD…EFKP) and 1732-1865 (TISP…GIVQ). The span at 1639 to 1666 (PSSSRPLSVASVSSLSSDSTPSRPGSDG) shows a compositional bias: low complexity. Positions 1680–1694 (RSQDKLDKDDLEKEK) are enriched in basic and acidic residues. A Phosphoserine modification is found at Ser-1681. Residues 1687-1695 (KDDLEKEKK) are phosphoinositide-binding. Residues 1695-1704 (KDKKKEKRNS) show a composition bias toward basic residues. Basic and acidic residues predominate over residues 1705–1716 (KHQEIFEKEFKP). Phosphoserine is present on residues Ser-1743, Ser-1751, Ser-1756, Ser-1761, and Ser-1764. Positions 1756-1766 (SVSPSSPSSQQ) are enriched in low complexity. Phosphothreonine is present on residues Thr-1767 and Thr-1772. The interval 1793 to 1819 (ADVADVPPPLPLKGSVADYGNLMENQD) is interaction with NCK2 second and third SH3 domain (minor). An SH3-binding; interaction with CRK motif is present at residues 1799-1805 (PPPLPLK). An interaction with NCK2 third SH3 domain (major) region spans residues 1820 to 1836 (LLGSPTPPPPPPHQRHL). A compositionally biased stretch (pro residues) spans 1824–1851 (PTPPPPPPHQRHLPPPLPSKTPPPPPPK). The segment at 1837–1852 (PPPLPSKTPPPPPPKT) is interaction with NCK2 (minor). The short motif at 1838 to 1843 (PPLPSK) is the SH3-binding; interaction with CRK element. Residues 1855–1865 (KQASVDSGIVQ) show a composition bias toward polar residues. At Ser-1858 the chain carries Phosphoserine.

The protein belongs to the DOCK family. As to quaternary structure, interacts with the SH3 domains of CRK and NCK2 via multiple sites. Interacts with nucleotide-free RAC1 via its DOCKER domain. Interacts with ELMO1, ELMO2 and probably ELMO3 via its SH3 domain. Interacts with ADGRB1. Identified in a complex with AUTS2 and ELMO2. In terms of tissue distribution, highly expressed in placenta, lung, kidney, pancreas and ovary. Expressed at intermediate level in thymus, testes and colon.

It localises to the cytoplasm. The protein resides in the membrane. Its function is as follows. Involved in cytoskeletal rearrangements required for phagocytosis of apoptotic cells and cell motility. Along with DOCK1, mediates CRK/CRKL regulation of epithelial and endothelial cell spreading and migration on type IV collagen. Functions as a guanine nucleotide exchange factor (GEF), which activates Rac Rho small GTPases by exchanging bound GDP for free GTP. Its GEF activity may be enhanced by ELMO1. This is Dedicator of cytokinesis protein 1 (DOCK1) from Homo sapiens (Human).